A 266-amino-acid polypeptide reads, in one-letter code: Undecaprenyl-diphosphatase (266 aa).

The next 8 helical transmembrane spans lie at 1–21 (MDIFQVIVLALIQGLTEFLPI), 39–59 (QGLTFDVAVNTGSLLAVVIYF), 87–107 (WWIILATIPAVIFGFTAKDFI), 114–134 (IEVIATTTIVFGLLLWWADKL), 144–164 (VGWKKALLIGFAQAMALIPGT), 184–204 (AARFSFLMSVPVSLGAAILVV), 218–238 (ALVLGTALSFVAAYLCIHYFL), and 246–266 (MTPFVIYRLALGAILCVVIFA).

The protein belongs to the UppP family.

It is found in the cell inner membrane. It carries out the reaction di-trans,octa-cis-undecaprenyl diphosphate + H2O = di-trans,octa-cis-undecaprenyl phosphate + phosphate + H(+). Functionally, catalyzes the dephosphorylation of undecaprenyl diphosphate (UPP). Confers resistance to bacitracin. This chain is Undecaprenyl-diphosphatase, found in Shewanella loihica (strain ATCC BAA-1088 / PV-4).